The sequence spans 480 residues: Nuclear receptor subfamily 6 group A member 1 (480 aa).

Residues 1-32 (MERDEPPPSGGGGGGGSAGFLEPPAALPPPPR) are disordered. Positions 57 to 132 (QRTCLICGDR…MGMNRKAIRE (76 aa)) form a DNA-binding region, nuclear receptor. Positions 60, 63, 77, 80, 96, 102, 112, and 115 each coordinate Zn(2+). 2 NR C4-type zinc fingers span residues 60 to 80 (CLIC…CEGC) and 96 to 120 (CSRD…LLKC). Disordered regions lie at residues 131-150 (REDG…QISE) and 162-199 (FEEE…LSSS). Positions 165 to 177 (EANHWSNHGDSDH) are enriched in basic and acidic residues. Residues 172-253 (HGDSDHSSPG…RSLDPQSYSL (82 aa)) are sufficient for interaction with UIMC1. Residues 187 to 199 (SNQPSPGSTLSSS) are compositionally biased toward low complexity. An NR LBD domain is found at 249–480 (QSYSLIHQLL…HSCKTSVGKE (232 aa)).

It belongs to the nuclear hormone receptor family. NR6 subfamily. As to quaternary structure, homodimer. Interacts with UIMC1. In terms of tissue distribution, shows highest expression in the germ cells of the adult testis.

The protein resides in the nucleus. Functionally, orphan nuclear receptor that binds to a response element containing the sequence 5'-TCAAGGTCA-3'. Acts as a regulator of embryonic stem cell pluripotency by mediating repression of POU5F1/OCT4: binds to the DR0 element within the POU5F1/OCT4 promoter and inhibits POU5F1/OCT4 expression during embryonic stem cell differentiation. Involved in the regulation of gene expression in germ cell development during gametogenesis. The protein is Nuclear receptor subfamily 6 group A member 1 (NR6A1) of Homo sapiens (Human).